Consider the following 269-residue polypeptide: Energy-coupling factor transporter transmembrane protein EcfT (269 aa).

The next 6 helical transmembrane spans lie at 45 to 65 (RFFLGWGVLLAFIVFLSRVSL), 75 to 95 (VLWLLVFTVLLHALFTPGEAI), 110 to 130 (MAALMGVRLVLLVAFAGLLTL), 153 to 173 (FPAHEMAMMMTIALRFIPTLL), 202 to 222 (FVPVLVPLFLIVFQRAEDLAL), and 244 to 264 (CLEDWVALGLMSVSVAGLLFL).

This sequence belongs to the energy-coupling factor EcfT family. In terms of assembly, forms a stable energy-coupling factor (ECF) transporter complex composed of 2 membrane-embedded substrate-binding proteins (S component), 2 ATP-binding proteins (A component) and 2 transmembrane proteins (T component). May be able to interact with more than 1 S component at a time.

The protein localises to the cell membrane. Its function is as follows. Transmembrane (T) component of an energy-coupling factor (ECF) ABC-transporter complex. Unlike classic ABC transporters this ECF transporter provides the energy necessary to transport a number of different substrates. This is Energy-coupling factor transporter transmembrane protein EcfT from Thermanaerovibrio acidaminovorans (strain ATCC 49978 / DSM 6589 / Su883) (Selenomonas acidaminovorans).